A 197-amino-acid chain; its full sequence is uncharacterized protein (197 aa).

6 consecutive transmembrane segments (helical) span residues 11 to 31 (AAMVRTGILGFGGGPSVIPLI), 50 to 70 (ILAIANALPGPIATKMAAYLG), 79 to 99 (AIVAILAHILPTCLAMVGLFA), 108 to 128 (AIVAGMIGAVTPVIAVMLGIM), 136 to 156 (ALKGFGWVTGILFFIIAFIGL), and 158 to 178 (TLQINPGLVIIIFLAYGAFHF).

Belongs to the chromate ion transporter (CHR) (TC 2.A.51) family.

Its subcellular location is the cell membrane. This is an uncharacterized protein from Bacillus subtilis (strain 168).